We begin with the raw amino-acid sequence, 121 residues long: Cytochrome c2 iso-2 (121 aa).

Residues Cys-15, Cys-18, His-19, and Met-98 each coordinate heme c.

Belongs to the cytochrome c family. In terms of processing, binds 1 heme c group covalently per subunit.

Functionally, cytochrome c2 is found mainly in purple, non-sulfur, photosynthetic bacteria where it functions as the electron donor to the oxidized bacteriochlorophyll in the photophosphorylation pathway. However, it may also have a role in the respiratory chain and is found in some non-photosynthetic bacteria. The sequence is that of Cytochrome c2 iso-2 from Rhodospirillum centenum (Rhodocista centenaria).